We begin with the raw amino-acid sequence, 186 residues long: Putative adenylate kinase (186 aa).

ATP is bound by residues Gly10, Gly12, Lys13, Thr14, and Ser15. Residues 30–53 (HLNELIKEEHLYTEVDEKRDSVVA) form an NMP region. An LID region spans residues 108–118 (KRGYSEEKVNE). Position 109 (Arg109) interacts with ATP.

It belongs to the adenylate kinase family. AK6 subfamily. In terms of assembly, interacts with uS11. Not a structural component of 40S pre-ribosomes, but transiently interacts with them by binding to uS11.

It catalyses the reaction AMP + ATP = 2 ADP. It carries out the reaction ATP + H2O = ADP + phosphate + H(+). In terms of biological role, broad-specificity nucleoside monophosphate (NMP) kinase that catalyzes the reversible transfer of the terminal phosphate group between nucleoside triphosphates and monophosphates. Also has ATPase activity. Involved in the late maturation steps of the 30S ribosomal particles, specifically 16S rRNA maturation. While NMP activity is not required for ribosome maturation, ATPase activity is. Associates transiently with small ribosomal subunit protein uS11. ATP hydrolysis breaks the interaction with uS11. May temporarily remove uS11 from the ribosome to enable a conformational change of the ribosomal RNA that is needed for the final maturation step of the small ribosomal subunit. The protein is Putative adenylate kinase of Methanosarcina acetivorans (strain ATCC 35395 / DSM 2834 / JCM 12185 / C2A).